The following is a 122-amino-acid chain: Large ribosomal subunit protein uL14 (122 aa).

This sequence belongs to the universal ribosomal protein uL14 family. In terms of assembly, part of the 50S ribosomal subunit. Forms a cluster with proteins L3 and L19. In the 70S ribosome, L14 and L19 interact and together make contacts with the 16S rRNA in bridges B5 and B8.

Functionally, binds to 23S rRNA. Forms part of two intersubunit bridges in the 70S ribosome. In Shewanella denitrificans (strain OS217 / ATCC BAA-1090 / DSM 15013), this protein is Large ribosomal subunit protein uL14.